Reading from the N-terminus, the 174-residue chain is Crossover junction endodeoxyribonuclease RuvC (174 aa).

Catalysis depends on residues Asp-8, Glu-67, and Asp-139. Positions 8, 67, and 139 each coordinate Mg(2+).

The protein belongs to the RuvC family. In terms of assembly, homodimer which binds Holliday junction (HJ) DNA. The HJ becomes 2-fold symmetrical on binding to RuvC with unstacked arms; it has a different conformation from HJ DNA in complex with RuvA. In the full resolvosome a probable DNA-RuvA(4)-RuvB(12)-RuvC(2) complex forms which resolves the HJ. Mg(2+) serves as cofactor.

Its subcellular location is the cytoplasm. The catalysed reaction is Endonucleolytic cleavage at a junction such as a reciprocal single-stranded crossover between two homologous DNA duplexes (Holliday junction).. In terms of biological role, the RuvA-RuvB-RuvC complex processes Holliday junction (HJ) DNA during genetic recombination and DNA repair. Endonuclease that resolves HJ intermediates. Cleaves cruciform DNA by making single-stranded nicks across the HJ at symmetrical positions within the homologous arms, yielding a 5'-phosphate and a 3'-hydroxyl group; requires a central core of homology in the junction. The consensus cleavage sequence is 5'-(A/T)TT(C/G)-3'. Cleavage occurs on the 3'-side of the TT dinucleotide at the point of strand exchange. HJ branch migration catalyzed by RuvA-RuvB allows RuvC to scan DNA until it finds its consensus sequence, where it cleaves and resolves the cruciform DNA. This chain is Crossover junction endodeoxyribonuclease RuvC, found in Pseudomonas fluorescens (strain SBW25).